Here is a 177-residue protein sequence, read N- to C-terminus: ATP-dependent protease subunit HslV (177 aa).

Residue Thr6 is part of the active site. Na(+)-binding residues include Gly161, Cys164, and Thr167.

The protein belongs to the peptidase T1B family. HslV subfamily. A double ring-shaped homohexamer of HslV is capped on each side by a ring-shaped HslU homohexamer. The assembly of the HslU/HslV complex is dependent on binding of ATP.

It localises to the cytoplasm. It carries out the reaction ATP-dependent cleavage of peptide bonds with broad specificity.. With respect to regulation, allosterically activated by HslU binding. In terms of biological role, protease subunit of a proteasome-like degradation complex believed to be a general protein degrading machinery. The protein is ATP-dependent protease subunit HslV of Petrotoga mobilis (strain DSM 10674 / SJ95).